The chain runs to 425 residues: Glutamyl-tRNA reductase (425 aa).

Substrate is bound by residues 49–52, Ser107, 112–114, and Gln118; these read TCNR and EPQ. Catalysis depends on Cys50, which acts as the Nucleophile. 187–192 is an NADP(+) binding site; sequence GAGETI.

This sequence belongs to the glutamyl-tRNA reductase family. In terms of assembly, homodimer.

The enzyme catalyses (S)-4-amino-5-oxopentanoate + tRNA(Glu) + NADP(+) = L-glutamyl-tRNA(Glu) + NADPH + H(+). The protein operates within porphyrin-containing compound metabolism; protoporphyrin-IX biosynthesis; 5-aminolevulinate from L-glutamyl-tRNA(Glu): step 1/2. Functionally, catalyzes the NADPH-dependent reduction of glutamyl-tRNA(Glu) to glutamate 1-semialdehyde (GSA). This chain is Glutamyl-tRNA reductase, found in Pseudomonas entomophila (strain L48).